Reading from the N-terminus, the 364-residue chain is tRNA/tmRNA (uracil-C(5))-methyltransferase (364 aa).

Positions 186, 214, 219, 235, and 295 each coordinate S-adenosyl-L-methionine. The active-site Nucleophile is the C320. The Proton acceptor role is filled by E354.

The protein belongs to the class I-like SAM-binding methyltransferase superfamily. RNA M5U methyltransferase family. TrmA subfamily.

The enzyme catalyses uridine(54) in tRNA + S-adenosyl-L-methionine = 5-methyluridine(54) in tRNA + S-adenosyl-L-homocysteine + H(+). It catalyses the reaction uridine(341) in tmRNA + S-adenosyl-L-methionine = 5-methyluridine(341) in tmRNA + S-adenosyl-L-homocysteine + H(+). Its function is as follows. Dual-specificity methyltransferase that catalyzes the formation of 5-methyluridine at position 54 (m5U54) in all tRNAs, and that of position 341 (m5U341) in tmRNA (transfer-mRNA). The sequence is that of tRNA/tmRNA (uracil-C(5))-methyltransferase from Azoarcus sp. (strain BH72).